The chain runs to 622 residues: Probable potassium transport system protein Kup (622 aa).

12 consecutive transmembrane segments (helical) span residues 8 to 28 (LAAL…TSVL), 50 to 70 (VLSV…VVLV), 100 to 120 (GWLL…GVIT), 137 to 157 (PHFG…LFAV), 169 to 189 (FGPV…PHIV), 203 to 223 (ALGF…AVVL), 247 to 267 (WFSV…ALLL), 285 to 305 (ALVP…QALI), 337 to 357 (IYLP…VVMF), 366 to 386 (AYGI…FFVI), 392 to 412 (YPLA…LAFF), and 419 to 439 (LLQG…LMMT).

The protein belongs to the HAK/KUP transporter (TC 2.A.72) family.

The protein localises to the cell inner membrane. The catalysed reaction is K(+)(in) + H(+)(in) = K(+)(out) + H(+)(out). Transport of potassium into the cell. Likely operates as a K(+):H(+) symporter. This is Probable potassium transport system protein Kup from Acidovorax ebreus (strain TPSY) (Diaphorobacter sp. (strain TPSY)).